Consider the following 250-residue polypeptide: Flavin-dependent thymidylate synthase (250 aa).

The ThyX domain occupies 7–233 (LRVQLIAKTD…PSIFGDFDIA (227 aa)). FAD contacts are provided by residues S71, 95–97 (RHR), and Q103. DUMP contacts are provided by residues 92–95 (ELIR), 103–107 (QLSQR), and R172. The short motif at 95 to 105 (RHRHFSYSQLS) is the ThyX motif element. FAD-binding positions include 188–190 (NYR) and H194. Residue R199 coordinates dUMP. The active-site Involved in ionization of N3 of dUMP, leading to its activation is R199.

This sequence belongs to the thymidylate synthase ThyX family. As to quaternary structure, homotetramer. It depends on FAD as a cofactor.

The catalysed reaction is dUMP + (6R)-5,10-methylene-5,6,7,8-tetrahydrofolate + NADPH + H(+) = dTMP + (6S)-5,6,7,8-tetrahydrofolate + NADP(+). It participates in pyrimidine metabolism; dTTP biosynthesis. Functionally, catalyzes the reductive methylation of 2'-deoxyuridine-5'-monophosphate (dUMP) to 2'-deoxythymidine-5'-monophosphate (dTMP) while utilizing 5,10-methylenetetrahydrofolate (mTHF) as the methyl donor, and NADPH and FADH(2) as the reductant. This is Flavin-dependent thymidylate synthase from Mycobacteroides abscessus (strain ATCC 19977 / DSM 44196 / CCUG 20993 / CIP 104536 / JCM 13569 / NCTC 13031 / TMC 1543 / L948) (Mycobacterium abscessus).